The following is a 519-amino-acid chain: Ribonuclease Y (519 aa).

Residues 3-23 (LLSLLLILLGIILGVVVGYIV) form a helical membrane-spanning segment. Positions 209–269 (TVSVVNLPND…IRREIARTAL (61 aa)) constitute a KH domain. An HD domain is found at 335–428 (VLKHSIEVAH…VAAADALSAA (94 aa)).

This sequence belongs to the RNase Y family.

The protein localises to the cell membrane. In terms of biological role, endoribonuclease that initiates mRNA decay. The sequence is that of Ribonuclease Y from Staphylococcus epidermidis (strain ATCC 35984 / DSM 28319 / BCRC 17069 / CCUG 31568 / BM 3577 / RP62A).